A 138-amino-acid chain; its full sequence is Ribosomal RNA large subunit methyltransferase H (138 aa).

S-adenosyl-L-methionine-binding positions include glycine 86 and 105–110 (LSPLTF).

This sequence belongs to the RNA methyltransferase RlmH family. Homodimer.

It is found in the cytoplasm. The catalysed reaction is pseudouridine(1915) in 23S rRNA + S-adenosyl-L-methionine = N(3)-methylpseudouridine(1915) in 23S rRNA + S-adenosyl-L-homocysteine + H(+). Specifically methylates the pseudouridine at position 1915 (m3Psi1915) in 23S rRNA. The protein is Ribosomal RNA large subunit methyltransferase H of Prochlorococcus marinus (strain MIT 9215).